Consider the following 3014-residue polypeptide: Cadherin EGF LAG seven-pass G-type receptor 1 (3014 aa).

A signal peptide spans 1–20 (MAPPPPPVLPVLLLLAAAAA). Topologically, residues 22 to 2469 (PAMGLRAAAW…RENGEVLPLK (2448 aa)) are extracellular. The segment at 205–242 (AGTPSASPSPSPPLPPNLPEARAGPARRARRGTSGRGS) is disordered. Residues 211–222 (SPSPSPPLPPNL) show a composition bias toward pro residues. Cadherin domains lie at 246 to 353 (PMPN…SPVF), 354 to 459 (EQSE…YPQF), 460 to 565 (SEQN…EPIF), 566 to 687 (VSSP…DPVF), 688 to 789 (TQPT…RPVF), 790 to 892 (QSSH…APQF), 893 to 999 (LWDF…APMF), 1000 to 1101 (EKDE…PPVL), and 1106 to 1224 (ILFN…SPLL). N-linked (GlcNAc...) asparagine glycosylation is found at Asn403, Asn546, Asn634, and Asn778. Asn1114, Asn1139, Asn1213, Asn1249, Asn1259, and Asn1287 each carry an N-linked (GlcNAc...) asparagine glycan. One can recognise an EGF-like 1; calcium-binding domain in the interval 1303–1361 (DDNICLREPCENYMKCVSVLRFDSSAPFLSSTTVLFRPIHPINGLRCRCPPGFTGDYCE). Intrachain disulfides connect Cys1307-Cys1318, Cys1312-Cys1349, Cys1351-Cys1360, Cys1367-Cys1378, Cys1372-Cys1387, Cys1389-Cys1398, Cys1407-Cys1418, Cys1412-Cys1428, and Cys1430-Cys1440. The region spanning 1363–1399 (EIDLCYSDPCGANGRCRSREGGYTCECFEDFTGEHCE) is the EGF-like 2; calcium-binding domain. One can recognise an EGF-like 3; calcium-binding domain in the interval 1403-1441 (RSGRCANGVCKNGGTCVNLLIGGFHCVCPPGEYERPYCE). In terms of domain architecture, Laminin G-like 1 spans 1442–1646 (VTTRSFPPQS…IANNGTREGC (205 aa)). Asn1576, Asn1623, and Asn1640 each carry an N-linked (GlcNAc...) asparagine glycan. Cystine bridges form between Cys1620/Cys1646, Cys1653/Cys1664, Cys1658/Cys1673, Cys1675/Cys1684, Cys1840/Cys1870, Cys1876/Cys1887, Cys1881/Cys1896, Cys1898/Cys1907, Cys1911/Cys1922, Cys1916/Cys1934, Cys1936/Cys1945, Cys1953/Cys1966, and Cys1968/Cys1978. An EGF-like 4; calcium-binding domain is found at 1649 to 1685 (RRNFCDGRRCQNGGTCVNRWNMYLCECPLRFGGKNCE). The residue at position 1666 (Asn1666) is a (3R)-3-hydroxyasparagine. In terms of domain architecture, Laminin G-like 2 spans 1689–1870 (PHPQLFSGES…ALKVRVKDGC (182 aa)). Residues 1872–1907 (VDDPCTSSPCPPNSRCHDAWEDYSCVCDKGYLGINC) enclose the EGF-like 5; calcium-binding domain. Asp1889 is subject to (3R)-3-hydroxyaspartate. The EGF-like 6; calcium-binding domain occupies 1908–1946 (VDACHLNPCENMGACVRSPGSPQGYVCECGPSHYGPYCE). Positions 1947–1979 (NKLDLPCPRGWWGNPVCGPCHCAVSKGFDPDCN) constitute an EGF-like 7; calcium-binding domain. N-linked (GlcNAc...) asparagine glycosylation occurs at Asn1979. An EGF-like 8; calcium-binding domain is found at 1981-2016 (TNGQCQCKENYYKLLAQDTCLPCDCFPHGSHSRTCD). 5 disulfides stabilise this stretch: Cys1985–Cys2000, Cys1987–Cys2003, Cys2005–Cys2015, Cys2024–Cys2033, and Cys2036–Cys2048. The Laminin EGF-like domain maps to 2003–2050 (CDCFPHGSHSRTCDMATGQCACKPGVIGRQCNRCDNPFAEVTTLGCEV). N-linked (GlcNAc...) asparagine glycosylation is found at Asn2103, Asn2122, and Asn2257. A disordered region spans residues 2291-2328 (PEEKEGPLLRPAGRRTTPQTTRPGPGTEREAPISRRRR). Residues 2297–2461 (PLLRPAGRRT…AVLMDISRRE (165 aa)) form the GAIN-B domain. A compositionally biased stretch (low complexity) spans 2300–2316 (RPAGRRTTPQTTRPGPG). 2 cysteine pairs are disulfide-bonded: Cys2411–Cys2443 and Cys2431–Cys2445. The tract at residues 2411–2461 (CVFWNHSLAVGGTGGWSARGCELLSRNRTHVACQCSHTASFAVLMDISRRE) is GPS. Residues Asn2415 and Asn2437 are each glycosylated (N-linked (GlcNAc...) asparagine). The helical transmembrane segment at 2470-2490 (IVTYAAVSLSLAALLVAFVLL) threads the bilayer. Residues 2491–2501 (SLVRMLRSNLH) are Cytoplasmic-facing. Residues 2502–2522 (SIHKHLAVALFLSQLVFVIGI) traverse the membrane as a helical segment. Residue Asn2523 is glycosylated (N-linked (GlcNAc...) asparagine). Residues 2523–2527 (NQTEN) lie on the Extracellular side of the membrane. The chain crosses the membrane as a helical span at residues 2528–2548 (PFLCTVVAILLHYIYMSTFAW). Over 2549-2572 (TLVESLHVYRMLTEVRNIDTGPMR) the chain is Cytoplasmic. Residues 2573 to 2593 (FYYVVGWGIPAIVTGLAVGLD) traverse the membrane as a helical segment. The Extracellular segment spans residues 2594–2611 (PQGYGNPDFCWLSLQDTL). A helical transmembrane segment spans residues 2612-2632 (IWSFAGPIGAVIIINTVTSVL). At 2633–2655 (SAKVSCQRKHHYYGKKGIVSLLR) the chain is on the cytoplasmic side. The chain crosses the membrane as a helical span at residues 2656–2676 (TAFLLLLLISATWLLGLLAVN). Over 2677–2683 (RDALSFH) the chain is Extracellular. Residues 2684–2704 (YLFAIFSGLQGPFVLLFHCVL) form a helical membrane-spanning segment. The Cytoplasmic portion of the chain corresponds to 2705–3014 (NQEVRKHLKG…QADGSDSEKP (310 aa)). Phosphoserine is present on residues Ser2761 and Ser2764. Disordered stretches follow at residues 2777-2939 (SSGL…PPPL) and 2954-3014 (LADC…SEKP). Residues 2796–2806 (SCKDPPGHDSD) show a composition bias toward basic and acidic residues. A compositionally biased stretch (low complexity) spans 2814–2825 (DEQSSSYASSHS). Phosphoserine is present on residues Ser2871 and Ser2873. Over residues 2876 to 2904 (PSGKPRLKVETKVSVELHREEQGSHRGEY) the composition is skewed to basic and acidic residues. A compositionally biased stretch (low complexity) spans 2960 to 2969 (SPTSSRTSSL). The span at 2983–2992 (PGREPGRDHL) shows a compositional bias: basic and acidic residues.

This sequence belongs to the G-protein coupled receptor 2 family. LN-TM7 subfamily. Post-translationally, the iron and 2-oxoglutarate dependent 3-hydroxylation of aspartate and asparagine is (R) stereospecific within EGF domains.

It localises to the cell membrane. Functionally, receptor that may have an important role in cell/cell signaling during nervous system formation. The protein is Cadherin EGF LAG seven-pass G-type receptor 1 (CELSR1) of Homo sapiens (Human).